The primary structure comprises 234 residues: Chromatin remodeling protein EBS (234 aa).

One can recognise a BAH domain in the interval 29-144 (KVVRAGDCVL…AATGAFTPDR (116 aa)). The PHD-type zinc finger occupies 146 to 197 (AVYCKCEMPYNPDDLMVQCEGCKDWYHPACVGMTIEEAKKLDHFVCAECSSD).

This sequence belongs to the SHL1/EBS protein family. Recognizes di- and trimethylated histone H3 at lysine 4 (H3K4me2 and H3K4me3). Interacts with HDA6. Expressed ubiquitously, with higher levels in floral buds.

It localises to the nucleus. Chromatin remodeling factor that binds to methylated histone (e.g. H3K4me2/3) to prevent their acetylation (e.g. H3K9K14Ac), likely by recruiting histone deacetylase (HDAC) complexes, and thus regulating the transcription of target genes. Negative regulator in developmental processes in a gibberellic acid- (GA-) dependent manner, such as germination, flowering induction, and flower organ specification, probably by modulating developmental gene expression. Involved in the chromatin-mediated repression of floral initiation and controls genes regulating flowering. Negatively regulates the expression of the floral integrator FT epigenetically, by preventing high levels of H3 acetylation, thus maintaining an inactive chromatin conformation at FT locus. The chain is Chromatin remodeling protein EBS from Arabidopsis thaliana (Mouse-ear cress).